A 192-amino-acid polypeptide reads, in one-letter code: Hydrogenase expression/formation protein HupD (192 aa).

Positions 23, 69, and 100 each coordinate Ni(2+).

This sequence belongs to the peptidase A31 family.

Its function is as follows. Not known. Could be involved in the processing of hydrogenase. This chain is Hydrogenase expression/formation protein HupD (hupD), found in Bradyrhizobium diazoefficiens (strain JCM 10833 / BCRC 13528 / IAM 13628 / NBRC 14792 / USDA 110).